An 831-amino-acid chain; its full sequence is SID1 transmembrane family member 1 (831 aa).

Positions 1–19 are cleaved as a signal peptide; it reads MLDCPRLALLCALPWLLRA. Over 20 to 308 the chain is Extracellular; the sequence is AVPGHRAEPL…SVKGSVYVKS (289 aa). 4 N-linked (GlcNAc...) asparagine glycosylation sites follow: N67, N83, N136, and N281. A helical membrane pass occupies residues 309–329; sequence SLFSVFVFLSFYLGCLLVVFV. Residues 330–441 lie on the Cytoplasmic side of the membrane; the sequence is HHMRFQRKPV…DRRIVSKKYK (112 aa). Positions 354–408 are disordered; it reads VSHPITASTPEGSNYGAIDESSSSPGRQMSSSDGGQPCHSDTDSSVEESDFDTMP. The segment covering 374 to 385 has biased composition (low complexity); it reads SSSSPGRQMSSS. Positions 397-408 are enriched in acidic residues; it reads SSVEESDFDTMP. The helical transmembrane segment at 442–462 threads the bilayer; sequence IYFWNIITIAVFYALPVMQLV. Topologically, residues 463–493 are extracellular; it reads ITYQTVVNVTGNQDICYYNFLCAHPLGVLSA. N-linked (GlcNAc...) asparagine glycosylation occurs at N470. The chain crosses the membrane as a helical span at residues 494 to 514; the sequence is FNNILSNLGHVLLGFLFLLIV. At 515-540 the chain is on the cytoplasmic side; it reads LRRDLLHRRALEAKDIFAMEYGIPKH. A helical transmembrane segment spans residues 541-561; sequence FGLFYAMGIALMMEGVLSACY. Topologically, residues 562-571 are extracellular; it reads HVCPNYSNFQ. Residue N566 is glycosylated (N-linked (GlcNAc...) asparagine). Residues 572–589 form a helical membrane-spanning segment; sequence FDTSFMYMIAGLCMLKLY. Residues 590–599 lie on the Cytoplasmic side of the membrane; that stretch reads QTRHPDINAS. The chain crosses the membrane as a helical span at residues 600–620; that stretch reads AYSAYASFAVVITLTVLGVVF. Over 621 to 625 the chain is Extracellular; that stretch reads GKNDV. Residues 626 to 646 traverse the membrane as a helical segment; that stretch reads WFWIIFSAIHVLASLALSTQI. Residues 647–687 are Cytoplasmic-facing; the sequence is YYMGRFKIDVSDTDLGIFRRAAMVFYTDCIQQCSRPLYMDR. The helical transmembrane segment at 688 to 708 threads the bilayer; that stretch reads MVLLIVGNLVNWSFALFGLIY. Topologically, residues 709 to 714 are extracellular; sequence RPRDFA. The helical transmembrane segment at 715–735 threads the bilayer; the sequence is SYMLGIFICNLLLYLAFYIIM. Over 736 to 745 the chain is Cytoplasmic; that stretch reads KLRSSEKVLP. A helical membrane pass occupies residues 746 to 766; it reads LPVFCIVATAVVWAAALYFFF. Residues 767–795 are Extracellular-facing; that stretch reads QNLSSWEGTPAESREKNRECVLLGFFDDH. A glycan (N-linked (GlcNAc...) asparagine) is linked at N768. A helical transmembrane segment spans residues 796-816; the sequence is DIWHFLSATALFFSFLVLLTL. Over 817 to 831 the chain is Cytoplasmic; the sequence is DDDLDVVRRDQIPVF.

This sequence belongs to the SID1 family.

The protein localises to the membrane. In terms of biological role, in vitro binds long double-stranded RNA (dsRNA) (500 and 700 base pairs), but not dsRNA shorter than 300 bp. Not involved in RNA autophagy, a process in which RNA is directly imported into lysosomes in an ATP-dependent manner, and degraded. In Rattus norvegicus (Rat), this protein is SID1 transmembrane family member 1 (Sidt1).